The sequence spans 180 residues: Large ribosomal subunit protein uL18m (180 aa).

It belongs to the universal ribosomal protein uL18 family. In terms of assembly, component of the mitochondrial ribosome large subunit (39S) which comprises a 16S rRNA and about 50 distinct proteins.

The protein resides in the mitochondrion. In terms of biological role, together with thiosulfate sulfurtransferase (TST), acts as a mitochondrial import factor for the cytosolic 5S rRNA. The precursor form shows RNA chaperone activity; is able to fold the 5S rRNA into an import-competent conformation that is recognized by rhodanese (TST). Both the cytoplasmic and mitochondrial forms are able to bind to the helix IV-loop D in the gamma domain of the 5S rRNA. This Mus musculus (Mouse) protein is Large ribosomal subunit protein uL18m (Mrpl18).